The following is an 816-amino-acid chain: Coiled-coil and C2 domain-containing protein 1-like (816 aa).

A compositionally biased stretch (basic and acidic residues) spans 1 to 11; it reads MFSRKKPEPAK. 3 disordered regions span residues 1–135, 157–176, and 186–269; these read MFSR…TFLP, ANAK…RGLK, and AAGK…RQTD. Acidic residues predominate over residues 25–47; sequence IPDDFDPSAGYGEDDGGDSDLEA. Basic and acidic residues predominate over residues 73–85; sequence DLDKMIADSLRDV. Positions 86–100 are enriched in acidic residues; the sequence is SDDDDDDNLESDPDL. Residues 122-131 are compositionally biased toward low complexity; that stretch reads PPAASEEPVQ. Residues 145–200 form a DM14 1 region; sequence IKQRLEMYKQAEANAKTAGDSGKARRFGRGLKTLKDLHRQAAAGKSINVDDIPPEV. Residues 220–243 are compositionally biased toward pro residues; sequence PSTPASPPPVPSRAAPDPPTPGTP. 2 DM14 regions span residues 265–317 and 365–419; these read SRQT…MPPP and LQQR…LPVP. A coiled-coil region spans residues 355-382; sequence LAAATNMLEALQQRLEKYQSVEAAAKAE. Residues 418-492 form a disordered region; sequence VPPGFGPLPT…TRTSGNQQKN (75 aa). The span at 424–433 shows a compositional bias: low complexity; that stretch reads PLPTADAAPV. Residues 434–449 show a composition bias toward pro residues; the sequence is APTPSLPTSPTSPPPT. Residues 450–471 are compositionally biased toward low complexity; sequence ASTSAGGTPSSSSATTPTAPRK. A compositionally biased stretch (polar residues) spans 483 to 492; that stretch reads TRTSGNQQKN. The segment at 502 to 556 is DM14 4; the sequence is LLERQKEFKLAAIEAKKAGEIDQAKEYLKIFKGFDSLLNAASSGLPVDLSTLPVP. One can recognise a C2 domain in the interval 637–776; sequence RKNEPLPKFH…ETKCEIHDTY (140 aa).

Belongs to the CC2D1 family. Interacts (via DM14 domains 1 and 3) with shrb; the interaction is direct and blocks access to the surface involved in shrb polymerization. This interaction may be required for the ESCRT-III complex role in multivesicular body formation.

It is found in the cytoplasm. The protein localises to the cytosol. The protein resides in the apicolateral cell membrane. Its subcellular location is the cell cortex. It localises to the endosome. In terms of biological role, phosphatidyl inositol monophosphate binding protein involved in endosomal protein sorting through regulation of the endosomal sorting required for transport (ESCRT) pathway. Required for full activity of the ESCRT-III complex core component shrb/shrub, probably by preventing its inappropriate polymerisation. Required, but not essential, for the efficient generation of intraluminal vesicles (ILVs) in multivesicular bodies (MVBs). Involved in a late stage of the endosomal pathway targeting transmembrane proteins of the plasma membrane for lysosomal degradation. Plays a critical role in regulation of multiple signal transduction pathways, including the Notch and BMP/decapentaplegic (dpp) signaling pathways, through targeting of membrane bound receptors to multivesicular bodies, isolating them from the cytoplasm and targeting them for lysosomal degradation. Involved in targeting N/Notch for endosomal degradation, negatively regulating the Notch signaling pathway. Regulates Notch signaling in imaginal disk cells and follicle cells during oogenesis and multiple developmental processes, including development of wings, veins, legs, eyes and bristles. Restricts the activity of Notch to the dorsoventral (D/V) boundary of the wing imaginal disk. In external sensory organ development regulates Notch signaling during asymmetric cell division and differentiation of sensory organ precursor cells. May be involved in regulation of apoptosis and cell growth independent of Notch signaling. Involved in targeting tkv for endosomal degradation, negatively regulating the BMP/decapentaplegic (dpp) signaling pathway. Regulates the BMP/dpp signaling pathway in follicle cells during oogenesis, but not in imaginal disk cells during wing development. May be involved in differentiation or morphogenesis of peripodial epithelial cells in the developing imaginal disk. Involved in abscission of germline cells during oogenesis. The sequence is that of Coiled-coil and C2 domain-containing protein 1-like from Drosophila melanogaster (Fruit fly).